Reading from the N-terminus, the 339-residue chain is Protein pelota homolog (339 aa).

This sequence belongs to the eukaryotic release factor 1 family. Pelota subfamily. In terms of assembly, monomer. A divalent metal cation serves as cofactor.

Its subcellular location is the cytoplasm. In terms of biological role, may function in recognizing stalled ribosomes, interact with stem-loop structures in stalled mRNA molecules, and effect endonucleolytic cleavage of the mRNA. May play a role in the release non-functional ribosomes and degradation of damaged mRNAs. Has endoribonuclease activity. This is Protein pelota homolog (pelA) from Thermoplasma acidophilum (strain ATCC 25905 / DSM 1728 / JCM 9062 / NBRC 15155 / AMRC-C165).